The primary structure comprises 439 residues: MGVANDSSPEYQWMSPHRLSDTVILGDCLYFNNIMSQLDLHQNWAPSVRLLNYFKNFNRETLLKIEENDYINSSFFQQKDKRFYPINDDFYHISTGGYGIVFKIDNYVVKFVFEATKLYSPMETTAEFTVPKFLYNNLKGDEKKLIVCALAMGLNYKLTFLHTLYKRVLNMLLLLIQTMDGQELSLRYSSKVFLKAFNERKDSIKFVKLLSHFYPAVINSNINVINYFNRMFHFFEHEKRTNYEYERGNIIIFPLALYSADKVDTELAIKLGFKSLVQYIKFIFLQMALLYIKIYELPRCDNFLHADLKPDNILLFDSNEPIIIHLKDKKFVFNERIKSALNDFDFSQVAGIINKKIKNNFKVEHNWYYDFHFFVHTLLKTYPEIEKDIEFSTALEEFIMCTKTDCDKYRLKVSILHPISFLEKFIMRDIFSDWINGRN.

The Protein kinase domain occupies 87–439 (NDDFYHISTG…IFSDWINGRN (353 aa)). ATP is bound by residues 93-101 (ISTGGYGIV) and lysine 117. Aspartate 307 serves as the catalytic Proton acceptor.

This sequence belongs to the protein kinase superfamily. Ser/Thr protein kinase family. Poxviruses subfamily. Phosphorylated in vivo. Autophosphorylated in vitro.

Its subcellular location is the host endoplasmic reticulum. It localises to the host endoplasmic reticulum-Golgi intermediate compartment. It catalyses the reaction L-seryl-[protein] + ATP = O-phospho-L-seryl-[protein] + ADP + H(+). The enzyme catalyses L-threonyl-[protein] + ATP = O-phospho-L-threonyl-[protein] + ADP + H(+). Functionally, essential serine-protein kinase involved in the early stage of virion morphogenesis. The polypeptide is Serine/threonine-protein kinase 2 (OPG054) (Homo sapiens (Human)).